A 523-amino-acid polypeptide reads, in one-letter code: 2-isopropylmalate synthase (523 aa).

The Pyruvate carboxyltransferase domain occupies 5–267 (VIIFDTTLRD…ETGINAKEIH (263 aa)). Asp14, His202, His204, and Asn238 together coordinate Mn(2+). The interval 392–523 (KLAQLVVHSD…QKDRSELGGV (132 aa)) is regulatory domain.

The protein belongs to the alpha-IPM synthase/homocitrate synthase family. LeuA type 1 subfamily. In terms of assembly, homodimer. Requires Mn(2+) as cofactor.

The protein localises to the cytoplasm. The enzyme catalyses 3-methyl-2-oxobutanoate + acetyl-CoA + H2O = (2S)-2-isopropylmalate + CoA + H(+). It functions in the pathway amino-acid biosynthesis; L-leucine biosynthesis; L-leucine from 3-methyl-2-oxobutanoate: step 1/4. Catalyzes the condensation of the acetyl group of acetyl-CoA with 3-methyl-2-oxobutanoate (2-ketoisovalerate) to form 3-carboxy-3-hydroxy-4-methylpentanoate (2-isopropylmalate). The chain is 2-isopropylmalate synthase from Shewanella sediminis (strain HAW-EB3).